The sequence spans 366 residues: uncharacterized protein (366 aa).

The OBG-type G domain maps to 63-288; the sequence is ARVAMVGFPS…LLEKMWEYLA (226 aa). Residues 69–76, 115–119, and 246–249 each bind GTP; these read GFPSVGKS, DLPGI, and NKVD. The TGS domain occupies 288–365; sequence ALVRVYTKKP…DHEDVIQIVK (78 aa).

Belongs to the TRAFAC class OBG-HflX-like GTPase superfamily. OBG GTPase family.

This is an uncharacterized protein from Caenorhabditis elegans.